The chain runs to 444 residues: Phosphoglucosamine mutase (444 aa).

Serine 103 serves as the catalytic Phosphoserine intermediate. Serine 103, aspartate 241, aspartate 243, and aspartate 245 together coordinate Mg(2+). The residue at position 103 (serine 103) is a Phosphoserine.

This sequence belongs to the phosphohexose mutase family. Requires Mg(2+) as cofactor. Post-translationally, activated by phosphorylation.

The catalysed reaction is alpha-D-glucosamine 1-phosphate = D-glucosamine 6-phosphate. Functionally, catalyzes the conversion of glucosamine-6-phosphate to glucosamine-1-phosphate. The chain is Phosphoglucosamine mutase from Deinococcus radiodurans (strain ATCC 13939 / DSM 20539 / JCM 16871 / CCUG 27074 / LMG 4051 / NBRC 15346 / NCIMB 9279 / VKM B-1422 / R1).